Reading from the N-terminus, the 169-residue chain is Allophycocyanin subunit beta-18 (169 aa).

Asn-72 is subject to N4-methylasparagine. Cys-82 provides a ligand contact to (2R,3E)-phycocyanobilin.

The protein belongs to the phycobiliprotein family. As to quaternary structure, heterodimer of ApcE and this beta chain. In terms of processing, contains one covalently linked bilin chromophore.

Its subcellular location is the cellular thylakoid membrane. Its function is as follows. A variant beta-allophycocyanin (AP) which forms a complex with ApcE, a phycobilisome terminal emitter that influences energy transfer to photosystem II. The chain is Allophycocyanin subunit beta-18 (apcF) from Synechocystis sp. (strain ATCC 27184 / PCC 6803 / Kazusa).